A 212-amino-acid polypeptide reads, in one-letter code: Phosphatidylserine decarboxylase proenzyme (212 aa).

The active-site Schiff-base intermediate with substrate; via pyruvic acid is S182. Pyruvic acid (Ser); by autocatalysis is present on S182.

Belongs to the phosphatidylserine decarboxylase family. PSD-A subfamily. As to quaternary structure, heterodimer of a large membrane-associated beta subunit and a small pyruvoyl-containing alpha subunit. The cofactor is pyruvate. In terms of processing, is synthesized initially as an inactive proenzyme. Formation of the active enzyme involves a self-maturation process in which the active site pyruvoyl group is generated from an internal serine residue via an autocatalytic post-translational modification. Two non-identical subunits are generated from the proenzyme in this reaction, and the pyruvate is formed at the N-terminus of the alpha chain, which is derived from the carboxyl end of the proenzyme. The post-translation cleavage follows an unusual pathway, termed non-hydrolytic serinolysis, in which the side chain hydroxyl group of the serine supplies its oxygen atom to form the C-terminus of the beta chain, while the remainder of the serine residue undergoes an oxidative deamination to produce ammonia and the pyruvoyl prosthetic group on the alpha chain.

It localises to the cell membrane. It carries out the reaction a 1,2-diacyl-sn-glycero-3-phospho-L-serine + H(+) = a 1,2-diacyl-sn-glycero-3-phosphoethanolamine + CO2. It functions in the pathway phospholipid metabolism; phosphatidylethanolamine biosynthesis; phosphatidylethanolamine from CDP-diacylglycerol: step 2/2. Functionally, catalyzes the formation of phosphatidylethanolamine (PtdEtn) from phosphatidylserine (PtdSer). In Chlorobium chlorochromatii (strain CaD3), this protein is Phosphatidylserine decarboxylase proenzyme.